The sequence spans 28 residues: Dermaseptin-H2 (28 aa).

The protein belongs to the frog skin active peptide (FSAP) family. Dermaseptin subfamily. In terms of tissue distribution, expressed by the skin glands.

It is found in the secreted. In terms of biological role, possesses a potent antimicrobial activity against Gram-positive and Gram-negative bacteria. Probably acts by disturbing membrane functions with its amphipathic structure. In Pithecopus azureus (Orange-legged monkey tree frog), this protein is Dermaseptin-H2.